The primary structure comprises 227 residues: Transmembrane emp24 domain-containing protein 1 (227 aa).

A signal peptide spans 1–23; that stretch reads MMAAGAALALALWLLMPPVEVGG. Over 24-194 the chain is Extracellular; it reads AGPPPIQDGE…LQEGNLERVN (171 aa). Positions 43-125 constitute a GOLD domain; the sequence is KQCFYQSAPA…EKLVFFELIF (83 aa). The stretch at 145-170 forms a coiled coil; that stretch reads EMLDVKMEDIKESIETMRTRLERSIQ. A helical transmembrane segment spans residues 195 to 215; that stretch reads FWSAVNVAVLLLVAVLQVCTL. Residues 216-227 are Cytoplasmic-facing; it reads KRFFQDKRPVPT. The COPII vesicle coat-binding motif lies at 218 to 219; that stretch reads FF. A COPI vesicle coat-binding motif is present at residues 218 to 227; sequence FFQDKRPVPT.

The protein belongs to the EMP24/GP25L family. As to quaternary structure, homodimer in endoplasmic reticulum, endoplasmic reticulum-Golgi intermediate compartment and cis-Golgi network. Interacts with IL1RL1. Interacts with RNF26; this interaction is important to modulate innate immune signaling through the cGAS-STING pathway. In terms of tissue distribution, widely expressed.

It localises to the cell membrane. Its subcellular location is the endoplasmic reticulum membrane. The protein resides in the golgi apparatus. The protein localises to the cis-Golgi network membrane. It is found in the endoplasmic reticulum-Golgi intermediate compartment membrane. Potential role in vesicular protein trafficking, mainly in the early secretory pathway. May act as a cargo receptor at the lumenal side for incorporation of secretory cargo molecules into transport vesicles and may be involved in vesicle coat formation at the cytoplasmic side. Plays a positive role in IL-33-mediated IL-8 and IL-6 production by interacting with interleukin-33 receptor IL1RL1. Also plays a role in the modulation of innate immune signaling through the cGAS-STING pathway by interacting with RNF26. The polypeptide is Transmembrane emp24 domain-containing protein 1 (TMED1) (Homo sapiens (Human)).